A 248-amino-acid chain; its full sequence is UPF0736 protein BcerKBAB4_1085 (248 aa).

The protein belongs to the UPF0736 family.

The protein is UPF0736 protein BcerKBAB4_1085 of Bacillus mycoides (strain KBAB4) (Bacillus weihenstephanensis).